Here is a 618-residue protein sequence, read N- to C-terminus: MCGIVGYAGRNAAAPVIIESLKKLEYRGYDSAGVTVLGSGVETYKAVGKIINLESEIPKNLKGAIGIGHTRWATHGRPSTENAHPHNSGGNPVKISLVHNGIIENYMALKERLIGEGYEFKSETDTEVIAHLLHKHIYGSPDGKEARNNLLAGLREALKEIEGSYALAVISADEQGKLVLARKDSPLVIGLGKGENFAASDVTAFLIHTRDVIFVDDFETAVLTPDSVEIFDREGKLKEKKIEKIEWDFEAAEKAGYEHFMLKEIHEQVSAIHNTLAGKVSELEGAIYLKELNLNDDEIKKLSRVQILACGTSWHAGLLGKYLFEQLAGIHCDIDICSEYRYRNPVMHEGTLAIAITQSGETADTLAAVREIMSYNCPTLAITNVVGSTITREANSVLYTRAGPEIGVAATKTFSTQLILLYLLAVKFALVRGKLSPDYVKSFITEIRKVPGEIQQILNQKEVIRECAENFACSKSYFFLGRHLSYPIALEGALKLKEISYVHAEGFAAGELKHGPIALLDEGAPVVAIATKGQTYEKMLSNIKEVKARDAYVIAVANINDTEIGKYADVVLRVPSCDELLAPLLSVVVLQLLAYYTALARDCAIDKPRNLAKSVTVE.

Catalysis depends on Cys2, which acts as the Nucleophile; for GATase activity. A Glutamine amidotransferase type-2 domain is found at 2 to 226; the sequence is CGIVGYAGRN…DFETAVLTPD (225 aa). Residues 72 to 91 form a disordered region; sequence WATHGRPSTENAHPHNSGGN. 2 consecutive SIS domains span residues 295–434 and 467–608; these read NDDE…VRGK and CAEN…IDKP. The For Fru-6P isomerization activity role is filled by Lys613.

Homodimer.

It is found in the cytoplasm. It catalyses the reaction D-fructose 6-phosphate + L-glutamine = D-glucosamine 6-phosphate + L-glutamate. Its function is as follows. Catalyzes the first step in hexosamine metabolism, converting fructose-6P into glucosamine-6P using glutamine as a nitrogen source. The chain is Glutamine--fructose-6-phosphate aminotransferase [isomerizing] from Methanosarcina mazei (strain ATCC BAA-159 / DSM 3647 / Goe1 / Go1 / JCM 11833 / OCM 88) (Methanosarcina frisia).